The following is a 695-amino-acid chain: Polyribonucleotide nucleotidyltransferase (695 aa).

Mg(2+) contacts are provided by Asp-486 and Asp-492. The KH domain occupies 553–612; that stretch reads PRIETMQINTSKIATVIGPGGKQIRQIIERSGAQVDINDDGVINIAASTQESINKAKELI. One can recognise an S1 motif domain in the interval 622 to 690; sequence GKVYNGRVTS…EKGQLKLSHK (69 aa).

The protein belongs to the polyribonucleotide nucleotidyltransferase family. Requires Mg(2+) as cofactor.

It localises to the cytoplasm. The catalysed reaction is RNA(n+1) + phosphate = RNA(n) + a ribonucleoside 5'-diphosphate. Its function is as follows. Involved in mRNA degradation. Catalyzes the phosphorolysis of single-stranded polyribonucleotides processively in the 3'- to 5'-direction. The protein is Polyribonucleotide nucleotidyltransferase of Chlamydia trachomatis serovar A (strain ATCC VR-571B / DSM 19440 / HAR-13).